Here is a 149-residue protein sequence, read N- to C-terminus: UPF0178 protein lwe1471 (149 aa).

This sequence belongs to the UPF0178 family.

This chain is UPF0178 protein lwe1471, found in Listeria welshimeri serovar 6b (strain ATCC 35897 / DSM 20650 / CCUG 15529 / CIP 8149 / NCTC 11857 / SLCC 5334 / V8).